The sequence spans 434 residues: Trigger factor (434 aa).

Positions 161–246 constitute a PPIase FKBP-type domain; sequence EDRATIDFTG…LKKVEERELP (86 aa).

It belongs to the FKBP-type PPIase family. Tig subfamily.

The protein localises to the cytoplasm. It carries out the reaction [protein]-peptidylproline (omega=180) = [protein]-peptidylproline (omega=0). Involved in protein export. Acts as a chaperone by maintaining the newly synthesized protein in an open conformation. Functions as a peptidyl-prolyl cis-trans isomerase. The sequence is that of Trigger factor from Pectobacterium atrosepticum (strain SCRI 1043 / ATCC BAA-672) (Erwinia carotovora subsp. atroseptica).